Consider the following 56-residue polypeptide: GSICLEPKVVGPCTAYFPRFYFDSETGKCTPFIYGGCEGNGNNFETLHACRAICRA.

A BPTI/Kunitz inhibitor domain is found at 4 to 54 (CLEPKVVGPCTAYFPRFYFDSETGKCTPFIYGGCEGNGNNFETLHACRAIC). Disulfide bonds link Cys-4–Cys-54, Cys-13–Cys-37, and Cys-29–Cys-50.

This sequence belongs to the venom Kunitz-type family. Sea anemone type 2 potassium channel toxin subfamily. Post-translationally, contains three disulfide bonds.

The protein resides in the secreted. Its subcellular location is the nematocyst. Serine protease inhibitor that inhibits trypsin (Ki=73.8 nM) and chymotrypsin (Ki=993 nM). In Heteractis magnifica (Magnificent sea anemone), this protein is PI-stichotoxin-Hmg3c.